The primary structure comprises 104 residues: Meiotically up-regulated gene 150 protein (104 aa).

A run of 3 helical transmembrane segments spans residues 30 to 50 (FFLKNIIVLSNYLYLLYKAWI), 54 to 74 (TISLCCDFPLFNFLFIAIPYF), and 84 to 104 (LLWFLFVSLCFITLSFQSLEI).

The protein resides in the endoplasmic reticulum membrane. Has a role in meiosis. The polypeptide is Meiotically up-regulated gene 150 protein (mug150) (Schizosaccharomyces pombe (strain 972 / ATCC 24843) (Fission yeast)).